Here is a 141-residue protein sequence, read N- to C-terminus: Plasmatocyte-spreading peptide (141 aa).

The signal sequence occupies residues 1–22 (MKLTINILFCLILISQYNSANG). Positions 23–118 (NLRDLFNNVR…ATGGKDDKGR (96 aa)) are excised as a propeptide. Over residues 46-58 (VKTLFHPSDKSGN) the composition is skewed to basic and acidic residues. The segment at 46-118 (VKTLFHPSDK…ATGGKDDKGR (73 aa)) is disordered. A compositionally biased stretch (low complexity) spans 83-98 (PVAVTPAPVVSTTTQA). Positions 99-108 (SAPTVATNGT) are enriched in polar residues. A disulfide bond links cysteine 125 and cysteine 137.

The protein belongs to the GBP/PSP1/paralytic peptide family.

Mediates the spreading of plasmatocytes to foreign surfaces. Plasmocytes are a class of hemocytes involved in insect cellular immunity. The protein is Plasmatocyte-spreading peptide (PSP1) of Chrysodeixis includens (Soybean looper).